The sequence spans 695 residues: Phosphate acetyltransferase (695 aa).

Positions 372-695 are phosphate acetyltransferase; sequence AFRYRLVKRA…LTAVQAASQR (324 aa).

The protein in the N-terminal section; belongs to the CobB/CobQ family. It in the C-terminal section; belongs to the phosphate acetyltransferase and butyryltransferase family. As to quaternary structure, homohexamer.

Its subcellular location is the cytoplasm. The catalysed reaction is acetyl-CoA + phosphate = acetyl phosphate + CoA. It functions in the pathway metabolic intermediate biosynthesis; acetyl-CoA biosynthesis; acetyl-CoA from acetate: step 2/2. Its function is as follows. Involved in acetate metabolism. The protein is Phosphate acetyltransferase (pta) of Nitrosomonas europaea (strain ATCC 19718 / CIP 103999 / KCTC 2705 / NBRC 14298).